A 315-amino-acid polypeptide reads, in one-letter code: Probable cell division protein WhiA (315 aa).

The segment at residues 280–313 (SLKELGEMLDPPVGKSGINHRLRKIEKIAEELRT) is a DNA-binding region (H-T-H motif).

This sequence belongs to the WhiA family.

In terms of biological role, involved in cell division and chromosome segregation. This Clostridium beijerinckii (strain ATCC 51743 / NCIMB 8052) (Clostridium acetobutylicum) protein is Probable cell division protein WhiA.